The chain runs to 476 residues: MEEPFLLRDELLVPSQVTWHTNPLTVELKRVSRLAAPMATVTIAQYLLPVISVMVAGHNGELQLSGVALANSFTNVTGFSIMCGLVGALETLCGQAYGAKQYEKIGTYAYSAIASNIPICFLISILWLYIEKILISLGQDPEISRIAGSYAFWLIPALFGQAIVIPLSRFLLTQGLVIPLLFTAVTTLLFHVLVCWTLVFLFGLGCNGPAMATSVSFWFYAVILSCYVRFSSSCEKTRGFVSRDFVSSIKQFFQYGIPSAAMICLEWWLFEILILCSGLLPNPKLETSVLSICLTIETLHYVISAGVAAAVSTRVSNNLGAGNPQVARVSVLAGLCLWIVESAFFSILLFTCRNIIGYAFSNSKEVLDYVADLTPLLCLSFILDGFTAVLNGVARGSGWQHIGAWNNTVSYYLVGAPVGIYLAFSRELNGKGLWCGVVVGSTVQATILAIVTASINWKEQAEKARKRIVSTENRLA.

12 helical membrane passes run Ala-35–Val-55, Gly-66–Val-86, Ile-117–Leu-137, Ile-146–Pro-166, Ala-184–Leu-204, Gly-208–Val-228, Ala-260–Leu-280, Val-289–Ala-309, Val-331–Thr-351, Val-370–Leu-390, Ile-402–Leu-422, and Leu-433–Ala-453.

It belongs to the multi antimicrobial extrusion (MATE) (TC 2.A.66.1) family. Ubiquitous. Highest expression in flowers and stems.

It localises to the cell membrane. Efflux carrier for plant-derived alkaloids, antibiotics, heavy metal and other toxic compounds. Involved in cadmium detoxification. Requires probably a proton-motive force for the efflux. This Arabidopsis thaliana (Mouse-ear cress) protein is Protein DETOXIFICATION 1.